Consider the following 613-residue polypeptide: Dihydroxy-acid dehydratase (613 aa).

D81 contributes to the Mg(2+) binding site. C122 serves as a coordination point for [2Fe-2S] cluster. Mg(2+)-binding residues include D123 and K124. An N6-carboxylysine modification is found at K124. Residue C195 participates in [2Fe-2S] cluster binding. Mg(2+) is bound at residue E491. S517 functions as the Proton acceptor in the catalytic mechanism.

This sequence belongs to the IlvD/Edd family. Homodimer. It depends on [2Fe-2S] cluster as a cofactor. Mg(2+) serves as cofactor.

It carries out the reaction (2R)-2,3-dihydroxy-3-methylbutanoate = 3-methyl-2-oxobutanoate + H2O. It catalyses the reaction (2R,3R)-2,3-dihydroxy-3-methylpentanoate = (S)-3-methyl-2-oxopentanoate + H2O. It participates in amino-acid biosynthesis; L-isoleucine biosynthesis; L-isoleucine from 2-oxobutanoate: step 3/4. It functions in the pathway amino-acid biosynthesis; L-valine biosynthesis; L-valine from pyruvate: step 3/4. Functionally, functions in the biosynthesis of branched-chain amino acids. Catalyzes the dehydration of (2R,3R)-2,3-dihydroxy-3-methylpentanoate (2,3-dihydroxy-3-methylvalerate) into 2-oxo-3-methylpentanoate (2-oxo-3-methylvalerate) and of (2R)-2,3-dihydroxy-3-methylbutanoate (2,3-dihydroxyisovalerate) into 2-oxo-3-methylbutanoate (2-oxoisovalerate), the penultimate precursor to L-isoleucine and L-valine, respectively. This chain is Dihydroxy-acid dehydratase, found in Aeromonas salmonicida (strain A449).